The primary structure comprises 274 residues: 2-dehydro-3-deoxyphosphooctonate aldolase (274 aa).

It belongs to the KdsA family.

The protein localises to the cytoplasm. It catalyses the reaction D-arabinose 5-phosphate + phosphoenolpyruvate + H2O = 3-deoxy-alpha-D-manno-2-octulosonate-8-phosphate + phosphate. The protein operates within carbohydrate biosynthesis; 3-deoxy-D-manno-octulosonate biosynthesis; 3-deoxy-D-manno-octulosonate from D-ribulose 5-phosphate: step 2/3. It functions in the pathway bacterial outer membrane biogenesis; lipopolysaccharide biosynthesis. In Rickettsia typhi (strain ATCC VR-144 / Wilmington), this protein is 2-dehydro-3-deoxyphosphooctonate aldolase.